The sequence spans 149 residues: Calmodulin (149 aa).

Ala-2 carries the post-translational modification N-acetylalanine. EF-hand domains lie at 8–43 (EQVSEFKEAFSLFDKDGDGQITTKELGTVMRSLGQN), 44–79 (PSESELQDMINEVDADNNGTIDFPEFLTMMARKMKD), 81–116 (DSEEEIREAFKVFDRDNNGFISAAELRHVMTSIGEK), and 117–149 (LTDDEVDEMIREADQDGDGRIDYNEFVQLMMQK). Residues Asp-21, Asp-23, Asp-25, Gln-27, Glu-32, Asp-57, Asp-59, Asn-61, Thr-63, Glu-68, Asp-94, Asp-96, Asn-98, Glu-105, Asp-130, Asp-132, Asp-134, Arg-136, and Glu-141 each contribute to the Ca(2+) site.

It belongs to the calmodulin family.

In terms of biological role, calmodulin mediates the control of a large number of enzymes, ion channels and other proteins by Ca(2+). Among the enzymes to be stimulated by the calmodulin-Ca(2+) complex are a number of protein kinases and phosphatases. The polypeptide is Calmodulin (Colletotrichum gloeosporioides (Anthracnose fungus)).